A 729-amino-acid chain; its full sequence is Catalase-peroxidase 1 (729 aa).

Positions 98–226 (WHSAGSYRIA…LAAVMMGLIY (129 aa)) form a cross-link, tryptophyl-tyrosyl-methioninium (Trp-Tyr) (with M-252). The active-site Proton acceptor is His-99. The segment at residues 226 to 252 (YVNPEGVDGNPDPLRTAKDIRETFARM) is a cross-link (tryptophyl-tyrosyl-methioninium (Tyr-Met) (with W-98)). Position 267 (His-267) interacts with heme b.

This sequence belongs to the peroxidase family. Peroxidase/catalase subfamily. In terms of assembly, homodimer or homotetramer. Requires heme b as cofactor. Post-translationally, formation of the three residue Trp-Tyr-Met cross-link is important for the catalase, but not the peroxidase activity of the enzyme.

The catalysed reaction is H2O2 + AH2 = A + 2 H2O. It catalyses the reaction 2 H2O2 = O2 + 2 H2O. Functionally, bifunctional enzyme with both catalase and broad-spectrum peroxidase activity. This chain is Catalase-peroxidase 1, found in Cellvibrio japonicus (strain Ueda107) (Pseudomonas fluorescens subsp. cellulosa).